The chain runs to 150 residues: 3-dehydroquinate dehydratase (150 aa).

The active-site Proton acceptor is Y26. Substrate-binding residues include N77, H83, and D90. H103 functions as the Proton donor in the catalytic mechanism. Residues 104–105 and R114 each bind substrate; that span reads LS.

It belongs to the type-II 3-dehydroquinase family. In terms of assembly, homododecamer.

It carries out the reaction 3-dehydroquinate = 3-dehydroshikimate + H2O. The protein operates within metabolic intermediate biosynthesis; chorismate biosynthesis; chorismate from D-erythrose 4-phosphate and phosphoenolpyruvate: step 3/7. Catalyzes a trans-dehydration via an enolate intermediate. The chain is 3-dehydroquinate dehydratase from Yersinia enterocolitica serotype O:8 / biotype 1B (strain NCTC 13174 / 8081).